A 255-amino-acid polypeptide reads, in one-letter code: tRNA pseudouridine synthase A (255 aa).

Aspartate 52 (nucleophile) is an active-site residue. Tyrosine 111 is a substrate binding site.

This sequence belongs to the tRNA pseudouridine synthase TruA family. As to quaternary structure, homodimer.

It carries out the reaction uridine(38/39/40) in tRNA = pseudouridine(38/39/40) in tRNA. Its function is as follows. Formation of pseudouridine at positions 38, 39 and 40 in the anticodon stem and loop of transfer RNAs. This Nitrobacter winogradskyi (strain ATCC 25391 / DSM 10237 / CIP 104748 / NCIMB 11846 / Nb-255) protein is tRNA pseudouridine synthase A.